A 389-amino-acid chain; its full sequence is S-adenosylmethionine synthase (389 aa).

Position 15 (His-15) interacts with ATP. Asp-17 is a binding site for Mg(2+). Glu-43 contacts K(+). L-methionine is bound by residues Glu-56 and Gln-99. A flexible loop region spans residues 99–109; that stretch reads QSPDIAQGVNE. ATP-binding positions include 166–168, 234–235, Asp-243, 249–250, Ala-266, and Lys-270; these read DAK, RF, and RK. Residue Asp-243 coordinates L-methionine. Lys-274 is an L-methionine binding site.

The protein belongs to the AdoMet synthase family. In terms of assembly, homotetramer; dimer of dimers. Mg(2+) serves as cofactor. K(+) is required as a cofactor.

Its subcellular location is the cytoplasm. It catalyses the reaction L-methionine + ATP + H2O = S-adenosyl-L-methionine + phosphate + diphosphate. The protein operates within amino-acid biosynthesis; S-adenosyl-L-methionine biosynthesis; S-adenosyl-L-methionine from L-methionine: step 1/1. In terms of biological role, catalyzes the formation of S-adenosylmethionine (AdoMet) from methionine and ATP. The overall synthetic reaction is composed of two sequential steps, AdoMet formation and the subsequent tripolyphosphate hydrolysis which occurs prior to release of AdoMet from the enzyme. The chain is S-adenosylmethionine synthase from Neisseria meningitidis serogroup C / serotype 2a (strain ATCC 700532 / DSM 15464 / FAM18).